The following is a 120-amino-acid chain: Large ribosomal subunit protein uL18 (120 aa).

The protein belongs to the universal ribosomal protein uL18 family. In terms of assembly, part of the 50S ribosomal subunit; part of the 5S rRNA/L5/L18/L25 subcomplex. Contacts the 5S and 23S rRNAs.

Its function is as follows. This is one of the proteins that bind and probably mediate the attachment of the 5S RNA into the large ribosomal subunit, where it forms part of the central protuberance. This chain is Large ribosomal subunit protein uL18, found in Methylobacterium sp. (strain 4-46).